Reading from the N-terminus, the 920-residue chain is Probable transport protein MmpL7 (920 aa).

12 helical membrane-spanning segments follow: residues 44-64 (LLVV…LTFT), 210-230 (ITAW…VLLL), 241-261 (AIVL…AAVV), 271-291 (VFSW…ATML), 311-331 (LPAF…LLLA), 344-364 (LGVF…IALA), 389-409 (SASA…IIGM), 761-781 (LIHD…LASM), 790-810 (AVGV…IALW), 822-842 (VPLV…VAGI), 864-884 (GAVA…VLVS), and 888-908 (FSVL…LITV).

The protein belongs to the resistance-nodulation-cell division (RND) (TC 2.A.6) family. MmpL subfamily.

The protein resides in the cell membrane. This chain is Probable transport protein MmpL7 (mmpL7), found in Mycobacterium bovis (strain ATCC BAA-935 / AF2122/97).